Here is a 441-residue protein sequence, read N- to C-terminus: MATHKTLLMCLGLPLFFPGALAQNHAPPGCSPDLDPLYYNLCDRSGAWGIVLEAVAGAGIITTFVLTIILVASLPFVQDTKKRSLLGTQVFFLLGTLGLFCLVFACVVKPDFSTCASRRFLFGVLFAICFSCLIAHTLSLNFLARKNHGPRGWVIFTVALLLTLVEVIINTEWLIITLVRGGGQVSTPGNGSADWTVTSPCAIANMDFVMALIYVMLLLLAAFLGAWPTLCGRFKRWRKHGVFVLLTTATSIAIWVVWIVMYTYGNKQHHSPTWDDPTLAIALAANAWTFVFFYVIPEVSQVTKPSPEQSYQGDMYPTRGVGYETILKEQTGQSMFVENKAFSMDEPASAKRPVSPYSGYNGQLLTSVYQPTEMALMHKGPSEGAYDVILPRATANSQVMGSANSTLRAEDMYMVQSHQVATPTKDGKISQDQSPKNKTRW.

The N-terminal stretch at 1–22 is a signal peptide; the sequence is MATHKTLLMCLGLPLFFPGALA. Over 23–49 the chain is Extracellular; that stretch reads QNHAPPGCSPDLDPLYYNLCDRSGAWG. Residues 50 to 70 form a helical membrane-spanning segment; the sequence is IVLEAVAGAGIITTFVLTIIL. Residues 71 to 84 lie on the Cytoplasmic side of the membrane; it reads VASLPFVQDTKKRS. Residues 85–105 form a helical membrane-spanning segment; it reads LLGTQVFFLLGTLGLFCLVFA. Residues 106–119 are Extracellular-facing; that stretch reads CVVKPDFSTCASRR. A helical membrane pass occupies residues 120 to 140; that stretch reads FLFGVLFAICFSCLIAHTLSL. The Cytoplasmic portion of the chain corresponds to 141–154; the sequence is NFLARKNHGPRGWV. Residues 155-175 traverse the membrane as a helical segment; it reads IFTVALLLTLVEVIINTEWLI. The Extracellular portion of the chain corresponds to 176-207; sequence ITLVRGGGQVSTPGNGSADWTVTSPCAIANMD. Asparagine 190 carries N-linked (GlcNAc...) asparagine glycosylation. A helical transmembrane segment spans residues 208–228; the sequence is FVMALIYVMLLLLAAFLGAWP. The Cytoplasmic portion of the chain corresponds to 229 to 240; it reads TLCGRFKRWRKH. The chain crosses the membrane as a helical span at residues 241 to 261; the sequence is GVFVLLTTATSIAIWVVWIVM. Topologically, residues 262–278 are extracellular; that stretch reads YTYGNKQHHSPTWDDPT. The helical transmembrane segment at 279 to 299 threads the bilayer; that stretch reads LAIALAANAWTFVFFYVIPEV. Residues 300-441 are Cytoplasmic-facing; it reads SQVTKPSPEQ…DQSPKNKTRW (142 aa). Phosphoserine occurs at positions 343, 382, 402, and 405. Tyrosine 413 is modified (phosphotyrosine). Residues 419 to 441 form a disordered region; sequence QVATPTKDGKISQDQSPKNKTRW. Position 422 is a phosphothreonine (threonine 422). Polar residues predominate over residues 430–441; sequence SQDQSPKNKTRW. Serine 434 is subject to Phosphoserine.

It belongs to the G-protein coupled receptor 3 family.

It localises to the cell membrane. In terms of biological role, this retinoic acid-inducible G-protein coupled receptor provide evidence for a possible interaction between retinoid and G-protein signaling pathways. In Rattus norvegicus (Rat), this protein is G-protein coupled receptor family C group 5 member C (Gprc5c).